A 218-amino-acid chain; its full sequence is Ras-related protein Rab-4A (218 aa).

Positions 23, 24, 25, 26, 27, 28, 42, 44, and 45 each coordinate GTP. Ser27 serves as a coordination point for Mg(2+). The Switch 1 motif lies at 44 to 49 (HTIGVE). Mg(2+) contacts are provided by Thr45 and Asp68. Residues 70–79 (AGQERFRSVT) carry the Switch 2 motif. Gly71 is a GTP binding site. Position 72 is a 5-glutamyl serotonin (Gln72). The GTP site is built by Asn126, Lys127, Asp129, Ala157, and Leu158. Ser190 bears the Phosphoserine mark. A Phosphoserine; by CDK1 modification is found at Ser204. 2 S-geranylgeranyl cysteine lipidation sites follow: Cys216 and Cys218. Cys218 carries the cysteine methyl ester modification.

Belongs to the small GTPase superfamily. Rab family. Interacts with RAB11FIP1, RABEP1, ZFYVE20 and RUFY1. Interacts with SGSM1, SGSM2 and SGSM3. Interacts (membrane-bound form) with NDRG1; the interaction involves NDRG1 in vesicular recycling of E-cadherin. Interacts (in GTP-bound form) with GRIPAP1. Interacts with RABEP1 and RBSN. Does not interact with HPS4. The cofactor is Mg(2+). Serotonylation of Gln-72 by TGM2 during activation and aggregation of platelets leads to constitutive activation of GTPase activity. Post-translationally, phosphorylated by CDK1 kinase during mitosis.

It is found in the membrane. The protein resides in the cytoplasm. It localises to the early endosome membrane. Its subcellular location is the recycling endosome membrane. The catalysed reaction is GTP + H2O = GDP + phosphate + H(+). Regulated by guanine nucleotide exchange factors (GEFs) which promote the exchange of bound GDP for free GTP. Regulated by GTPase activating proteins (GAPs) which increase the GTP hydrolysis activity. Inhibited by GDP dissociation inhibitors (GDIs). Functionally, the small GTPases Rab are key regulators of intracellular membrane trafficking, from the formation of transport vesicles to their fusion with membranes. Rabs cycle between an inactive GDP-bound form and an active GTP-bound form that is able to recruit to membranes different sets of downstream effectors directly responsible for vesicle formation, movement, tethering and fusion. RAB4A is involved in protein transport. Also plays a role in vesicular traffic. Mediates VEGFR2 endosomal trafficking to enhance VEGFR2 signaling. Acts as a regulator of platelet alpha-granule release during activation and aggregation of platelets. The polypeptide is Ras-related protein Rab-4A (RAB4A) (Bos taurus (Bovine)).